We begin with the raw amino-acid sequence, 271 residues long: Dermonecrotic toxin SpeSicTox-betaIF1 (271 aa).

His-3 is an active-site residue. Positions 23 and 25 each coordinate Mg(2+). His-39 (nucleophile) is an active-site residue. Intrachain disulfides connect Cys-43/Cys-49 and Cys-45/Cys-188. Asp-83 lines the Mg(2+) pocket.

Belongs to the arthropod phospholipase D family. Class II subfamily. Mg(2+) is required as a cofactor. In terms of tissue distribution, expressed by the venom gland.

The protein localises to the secreted. The catalysed reaction is an N-(acyl)-sphingosylphosphocholine = an N-(acyl)-sphingosyl-1,3-cyclic phosphate + choline. It carries out the reaction an N-(acyl)-sphingosylphosphoethanolamine = an N-(acyl)-sphingosyl-1,3-cyclic phosphate + ethanolamine. The enzyme catalyses a 1-acyl-sn-glycero-3-phosphocholine = a 1-acyl-sn-glycero-2,3-cyclic phosphate + choline. It catalyses the reaction a 1-acyl-sn-glycero-3-phosphoethanolamine = a 1-acyl-sn-glycero-2,3-cyclic phosphate + ethanolamine. In terms of biological role, dermonecrotic toxins cleave the phosphodiester linkage between the phosphate and headgroup of certain phospholipids (sphingolipid and lysolipid substrates), forming an alcohol (often choline) and a cyclic phosphate. This toxin acts on sphingomyelin (SM). It may also act on ceramide phosphoethanolamine (CPE), lysophosphatidylcholine (LPC) and lysophosphatidylethanolamine (LPE), but not on lysophosphatidylserine (LPS), and lysophosphatidylglycerol (LPG). It acts by transphosphatidylation, releasing exclusively cyclic phosphate products as second products. Induces dermonecrosis, hemolysis, increased vascular permeability, edema, inflammatory response, and platelet aggregation. The polypeptide is Dermonecrotic toxin SpeSicTox-betaIF1 (Sicarius peruensis (Six-eyed sand spider)).